We begin with the raw amino-acid sequence, 683 residues long: Pre-mRNA-splicing factor CLF1 (683 aa).

HAT repeat units follow at residues 40–72, 74–106, 108–140, 142–173, 175–206, 291–323, 336–367, 374–407, 409–440, 442–474, 476–513, 515–547, and 582–620; these read DWQR…FEYE, RDMR…CELR, RDVN…MEES, GQVE…FETR, GQVE…FERK, SILF…LLEE, ATVK…FLET, LTRS…FEIR, EKLD…LEIK, KEFD…LEEN, GDED…FETD, SEFE…YESS, and ENKE…YESI.

This sequence belongs to the crooked-neck family. In terms of assembly, associated with the spliceosome.

The protein localises to the nucleus. Involved in pre-mRNA splicing and cell cycle progression. Required for the spliceosome assembly and initiation of the DNA replication. In Eremothecium gossypii (strain ATCC 10895 / CBS 109.51 / FGSC 9923 / NRRL Y-1056) (Yeast), this protein is Pre-mRNA-splicing factor CLF1 (CLF1).